We begin with the raw amino-acid sequence, 186 residues long: Quinone reductase (186 aa).

FMN-binding positions include 13–20 (SLRKESYN), 80–83 (EHNR), and S116.

The protein belongs to the SsuE family. As to quaternary structure, homotetramer. Dimer of dimers. The tetrameric configuration has a central role in chromate reductase activity. Requires FMN as cofactor.

It carries out the reaction a quinone + NADH + H(+) = a quinol + NAD(+). The enzyme catalyses a quinone + NADPH + H(+) = a quinol + NADP(+). The catalysed reaction is Cr(6+) + 2 NADH + O2 = Cr(3+) + superoxide + 2 NAD(+) + 2 H(+). It catalyses the reaction Cr(6+) + 2 NADPH + O2 = Cr(3+) + superoxide + 2 NADP(+) + 2 H(+). With respect to regulation, non-competitively inhibited by sulfate. In terms of biological role, catalyzes the reduction of quinones. Acts by simultaneous two-electron transfer, avoiding formation of highly reactive semiquinone intermediates and producing quinols that promote tolerance of H(2)O(2). Quinone reduction is probably the primary biological role of ChrR. Can also reduce toxic chromate to insoluble and less toxic Cr(3+). Catalyzes the transfer of three electrons to Cr(6+) producing Cr(3+) and one electron to molecular oxygen. This reaction produces transiently a minimal amount of the toxic Cr(5+) species and reactive oxygen species (ROS). Chromate reduction protects the cell against chromate toxicity, but is likely a secondary activity. The sequence is that of Quinone reductase (chrR) from Pseudomonas putida (Arthrobacter siderocapsulatus).